Consider the following 538-residue polypeptide: Atos homolog protein B (538 aa).

Over residues Met1–Pro18 the composition is skewed to low complexity. 2 disordered regions span residues Met1 to Ala114 and Thr133 to Pro300. Pro residues predominate over residues His227–Cys238. Ser254 and Ser255 each carry phosphoserine. The tract at residues Leu348–Thr430 is required for macropage invasion. The transactivation domain 1 (TAD1) stretch occupies residues Gln436 to Val444.

The protein belongs to the ATOS family.

The protein resides in the nucleus. In terms of biological role, transcription regulator that may syncronize transcriptional and translational programs. The protein is Atos homolog protein B of Homo sapiens (Human).